The chain runs to 724 residues: Degenerin mec-10 (724 aa).

A compositionally biased stretch (polar residues) spans 1-15; sequence MNRNPRMSKFQPNPR. Residues 1–22 form a disordered region; it reads MNRNPRMSKFQPNPRSRSRFQD. Topologically, residues 1-122 are cytoplasmic; sequence MNRNPRMSKF…GQAPNSLYRA (122 aa). Residues 123–143 traverse the membrane as a helical segment; sequence AWVFLLLICAIQFINQAVAVI. Topologically, residues 144–684 are extracellular; it reads QKYQKMDKIT…FGGHLGLWSG (541 aa). The disordered stretch occupies residues 229-265; sequence KRGAGEKGTFEPANSACECDEEDGSNECEERSTEKPS. The span at 246 to 255 shows a compositional bias: acidic residues; sequence ECDEEDGSNE. Residues 256-265 are compositionally biased toward basic and acidic residues; it reads CEERSTEKPS. Residues N293, N369, N463, N605, and N624 are each glycosylated (N-linked (GlcNAc...) asparagine). The helical transmembrane segment at 685-705 threads the bilayer; the sequence is VSVMTCCEFVCLAFELIYMAI. Topologically, residues 706–724 are cytoplasmic; it reads AHHINQQRIRRRENAANEY.

It belongs to the amiloride-sensitive sodium channel (TC 1.A.6) family. In terms of assembly, component of a non-voltage-gated amiloride-sensitive cation channel complex (also called the degenerin channel complex) composed of at least the mec-2, mec-4, mec-6 and mec-10 subunits; the complex mediates mechanotransduction in touch cells. Interacts with mec-4 and mec-6.

The protein resides in the cell membrane. In terms of biological role, subunit of an amiloride-sensitive cation channel (degenerin channel complex) permeable for sodium, potassium, lithium and N-methylglucamine, and required for mechanosensory transduction (touch sensitivity). Negatively regulates the turning step of male mating behavior. The protein is Degenerin mec-10 of Caenorhabditis elegans.